The sequence spans 95 residues: uncharacterized protein (95 aa).

Positions 1 to 17 are cleaved as a signal peptide; that stretch reads MTSSLVIYIFLWSRLIC.

This is an uncharacterized protein from Saccharomyces cerevisiae (strain ATCC 204508 / S288c) (Baker's yeast).